Here is a 259-residue protein sequence, read N- to C-terminus: Phosphatidylglycerol--prolipoprotein diacylglyceryl transferase (259 aa).

4 helical membrane passes run 9–29 (IIFS…VVGI), 55–75 (FITY…VLLY), 92–112 (EGGM…YLFC), and 117–137 (INFL…LFLG). Position 138 (Arg138) interacts with a 1,2-diacyl-sn-glycero-3-phospho-(1'-sn-glycerol). Helical transmembrane passes span 172–192 (QLYE…YAVF), 201–221 (GLNS…IEMF), and 228–248 (IGFI…MLLL).

The protein belongs to the Lgt family.

The protein localises to the cell inner membrane. The enzyme catalyses L-cysteinyl-[prolipoprotein] + a 1,2-diacyl-sn-glycero-3-phospho-(1'-sn-glycerol) = an S-1,2-diacyl-sn-glyceryl-L-cysteinyl-[prolipoprotein] + sn-glycerol 1-phosphate + H(+). Its pathway is protein modification; lipoprotein biosynthesis (diacylglyceryl transfer). Functionally, catalyzes the transfer of the diacylglyceryl group from phosphatidylglycerol to the sulfhydryl group of the N-terminal cysteine of a prolipoprotein, the first step in the formation of mature lipoproteins. In Rickettsia typhi (strain ATCC VR-144 / Wilmington), this protein is Phosphatidylglycerol--prolipoprotein diacylglyceryl transferase.